The chain runs to 215 residues: Pyrrolidone-carboxylate peptidase (215 aa).

Active-site residues include E78, C141, and H165.

This sequence belongs to the peptidase C15 family. In terms of assembly, homotetramer.

Its subcellular location is the cytoplasm. It carries out the reaction Release of an N-terminal pyroglutamyl group from a polypeptide, the second amino acid generally not being Pro.. In terms of biological role, removes 5-oxoproline from various penultimate amino acid residues except L-proline. The protein is Pyrrolidone-carboxylate peptidase (pcp) of Streptococcus pyogenes serotype M1.